A 228-amino-acid chain; its full sequence is Urease accessory protein UreF (228 aa).

The protein belongs to the UreF family. As to quaternary structure, ureD, UreF and UreG form a complex that acts as a GTP-hydrolysis-dependent molecular chaperone, activating the urease apoprotein by helping to assemble the nickel containing metallocenter of UreC. The UreE protein probably delivers the nickel.

Its subcellular location is the cytoplasm. In terms of biological role, required for maturation of urease via the functional incorporation of the urease nickel metallocenter. This chain is Urease accessory protein UreF, found in Brucella ovis (strain ATCC 25840 / 63/290 / NCTC 10512).